The following is a 655-amino-acid chain: MGIFSIANQHIRFAVKLATAIVLALFVGFHFQLETPRWAVLTAAIVAAGPAFAAGGEPYSGAIRYRGFLRIIGTFIGCIAGLVIIIAMIHAPLLMILVCCIWAGFCTWISSLVRIENSYAWGLAGYTALIIVITIQPEPLLTPQFAVERCSEIVIGIVCAIMADLLFSPRSIKQEVDRELESLLVAQYQLMQLCIKHGDGEVVDKAWGDLVRRTTALQGMRSNLNMESSRWARANRRLKAINTLSLTLITQSCETYLIQNTRPELITDTFREFFDTPVETAQDVHKQLKRLRRVIAWTGERETPVTIYSWVAAATRYQLLKRGVISNTKINATEEEILQGEPEVKVEPAERHHAMVNFWRTTLSCILGTLFWLWTGWTSGSGAMVMIAVVTSLAMRLPNPRMVAIDFIYGTLAALPLGLLYFLVIIPNTQQSMLLLCISLAVLGFFLGIEVQKRRLGSMGALASTINIIVLDNPMTFHFSQFLDSALGQIVGCVLAFTVILLVRDKSRDRTGRVLLNQFVSAAVSAMTTNVARRKENHLPALYQQLFLLMNKFPGDLPKFRLALTMIIAHQRLRDAPIPVNEDLSAFHRQMRRTADHVISARSDDKRRRYFGQLLEELEIYQEKLRIWQAPPQVTEPVHRLAGMLHKYQHALTDS.

Helical transmembrane passes span Phe13–Leu33, Trp38–Pro58, Gly67–Ile89, Leu93–Leu112, Trp121–Leu141, Glu152–Ile172, Leu370–Val390, Phe407–Pro427, Gln431–Val451, Met459–Phe479, and Phe482–Leu502.

Belongs to the aromatic acid exporter ArAE (TC 2.A.85) family.

It is found in the cell inner membrane. Forms an efflux pump with AaeA. Could function as a metabolic relief valve, allowing to eliminate certain compounds when they accumulate to high levels in the cell. This chain is p-hydroxybenzoic acid efflux pump subunit AaeB, found in Escherichia coli O9:H4 (strain HS).